The chain runs to 116 residues: Large ribosomal subunit protein bL19 (116 aa).

It belongs to the bacterial ribosomal protein bL19 family.

Its function is as follows. This protein is located at the 30S-50S ribosomal subunit interface and may play a role in the structure and function of the aminoacyl-tRNA binding site. The chain is Large ribosomal subunit protein bL19 from Pseudomonas putida (strain W619).